A 410-amino-acid polypeptide reads, in one-letter code: Tyrosine--tRNA ligase (410 aa).

Tyr36 contributes to the L-tyrosine binding site. Positions 41 to 50 (ATADSLTAGH) match the 'HIGH' region motif. Residues Tyr169 and Gln173 each coordinate L-tyrosine. A 'KMSKS' region motif is present at residues 229-233 (KMGKT). Lys232 is an ATP binding site. Residues 343–409 (IDLITMMIDA…GKKAYHLFRA (67 aa)) form the S4 RNA-binding domain.

The protein belongs to the class-I aminoacyl-tRNA synthetase family. TyrS type 1 subfamily. As to quaternary structure, homodimer.

It is found in the cytoplasm. The catalysed reaction is tRNA(Tyr) + L-tyrosine + ATP = L-tyrosyl-tRNA(Tyr) + AMP + diphosphate + H(+). Its function is as follows. Catalyzes the attachment of tyrosine to tRNA(Tyr) in a two-step reaction: tyrosine is first activated by ATP to form Tyr-AMP and then transferred to the acceptor end of tRNA(Tyr). In Lachnoclostridium phytofermentans (strain ATCC 700394 / DSM 18823 / ISDg) (Clostridium phytofermentans), this protein is Tyrosine--tRNA ligase.